The following is a 433-amino-acid chain: Glutamate-1-semialdehyde 2,1-aminomutase (433 aa).

An N6-(pyridoxal phosphate)lysine modification is found at lysine 273.

The protein belongs to the class-III pyridoxal-phosphate-dependent aminotransferase family. HemL subfamily. In terms of assembly, homodimer. Pyridoxal 5'-phosphate serves as cofactor.

It localises to the cytoplasm. The catalysed reaction is (S)-4-amino-5-oxopentanoate = 5-aminolevulinate. The protein operates within porphyrin-containing compound metabolism; protoporphyrin-IX biosynthesis; 5-aminolevulinate from L-glutamyl-tRNA(Glu): step 2/2. It functions in the pathway porphyrin-containing compound metabolism; chlorophyll biosynthesis. This Gloeothece citriformis (strain PCC 7424) (Cyanothece sp. (strain PCC 7424)) protein is Glutamate-1-semialdehyde 2,1-aminomutase.